The chain runs to 365 residues: 3-isopropylmalate dehydrogenase (365 aa).

78-89 (GPKWGTGKVRPE) contributes to the NAD(+) binding site. Substrate is bound by residues Arg96, Arg106, Arg135, and Asp224. Mg(2+)-binding residues include Asp224, Asp249, and Asp253. 289-301 (GSAPDISGKGIVN) is a binding site for NAD(+).

Belongs to the isocitrate and isopropylmalate dehydrogenases family. In terms of assembly, homodimer. Mg(2+) is required as a cofactor. The cofactor is Mn(2+).

It is found in the cytoplasm. It carries out the reaction (2R,3S)-3-isopropylmalate + NAD(+) = 4-methyl-2-oxopentanoate + CO2 + NADH. It participates in amino-acid biosynthesis; L-leucine biosynthesis; L-leucine from 3-methyl-2-oxobutanoate: step 3/4. Functionally, catalyzes the oxidation of 3-carboxy-2-hydroxy-4-methylpentanoate (3-isopropylmalate) to 3-carboxy-4-methyl-2-oxopentanoate. The product decarboxylates to 4-methyl-2 oxopentanoate. The polypeptide is 3-isopropylmalate dehydrogenase (LEUC) (Zymoseptoria tritici (Speckled leaf blotch fungus)).